Here is a 222-residue protein sequence, read N- to C-terminus: Endonuclease V (222 aa).

The Mg(2+) site is built by Asp-34 and Asp-102.

Belongs to the endonuclease V family. Mg(2+) serves as cofactor.

Its subcellular location is the cytoplasm. It catalyses the reaction Endonucleolytic cleavage at apurinic or apyrimidinic sites to products with a 5'-phosphate.. Its function is as follows. DNA repair enzyme involved in the repair of deaminated bases. Selectively cleaves double-stranded DNA at the second phosphodiester bond 3' to a deoxyinosine leaving behind the intact lesion on the nicked DNA. This chain is Endonuclease V, found in Proteus mirabilis (strain HI4320).